The chain runs to 691 residues: MARDFPLERVRNIGIAAHIDAGKTTTTERILFYSGVVHKIGEVHDGAAVTDWMAQERERGITITAAAISTSWQDHRINIIDTPGHVDFTIEVERSMRVLDGVIAVFCAVGGVQPQSETVWRQADRYSVPRMVFVNKMDRTGADFLKVHGQIKDRLKANAVPIQLPIGAEGELSGIIDLVANKAYIYKNDLGTDIEEADVPADMADEVAEWRNTLMETVAETDEALIEKFLESGELSVDDLKKGIREGVLKHGLVPMLCGSAFKNKGVQLVLDAVIDYLPAPVDVPPIQGVLPDGSEAVRPSDDSAPFSALAFKVMADPYGKLTFVRMYSGILEKGSYVLNSTKGEKERISRLVVLKADDREEVDALRAGDLGAVLGLKNTTTGDTLCTQDDPIVLETLFIPEPVISVAVEPKTKGDMEKLSKALVALAEEDPTFRVNTDSETGQTVIAGMGELHLEILVDRMLREFKVEANIGAPQVSYRETIRGSAGGEGKFSRQTGGKGQYGHVVIEMEPGEPGSGFEFVNKIVGGVVPKEYIKPAEQGMKETCESGVIAGYPLIDVKCTLVHGSYHDVDSSEMAFKIAGSMAFKDGVKKCNPVLLEPMMKVEVEAPEDFLGSIIGDLSSRRGQVEGQSVEDGTSKISAKVPLAEMFGYATELRSMTQGRGIFSMEFDNYAEVPRNVAEAIISKNQGNS.

The tr-type G domain occupies 8–282 (ERVRNIGIAA…AVIDYLPAPV (275 aa)). GTP is bound by residues 17–24 (AHIDAGKT), 81–85 (DTPGH), and 135–138 (NKMD).

Belongs to the TRAFAC class translation factor GTPase superfamily. Classic translation factor GTPase family. EF-G/EF-2 subfamily.

It localises to the cytoplasm. Its function is as follows. Catalyzes the GTP-dependent ribosomal translocation step during translation elongation. During this step, the ribosome changes from the pre-translocational (PRE) to the post-translocational (POST) state as the newly formed A-site-bound peptidyl-tRNA and P-site-bound deacylated tRNA move to the P and E sites, respectively. Catalyzes the coordinated movement of the two tRNA molecules, the mRNA and conformational changes in the ribosome. The protein is Elongation factor G of Synechococcus sp. (strain CC9605).